A 651-amino-acid chain; its full sequence is ATP-dependent zinc metalloprotease FtsH (651 aa).

Over 1–134 the chain is Extracellular; that stretch reads MIVFATILFG…FTTDPQTAGP (134 aa). A helical transmembrane segment spans residues 135–155; it reads WARAIAVMAPFVLILLLFFLM. Residues 156 to 651 are Cytoplasmic-facing; sequence TRTGRSASQS…PAMSVNGHRG (496 aa). 229 to 236 is an ATP binding site; the sequence is GPPGTGKT. His-451 serves as a coordination point for Zn(2+). Glu-452 is a catalytic residue. Zn(2+) contacts are provided by His-455 and Asp-527.

In the central section; belongs to the AAA ATPase family. It in the C-terminal section; belongs to the peptidase M41 family. In terms of assembly, homohexamer. Requires Zn(2+) as cofactor.

The protein resides in the cell membrane. Functionally, acts as a processive, ATP-dependent zinc metallopeptidase for both cytoplasmic and membrane proteins. Plays a role in the quality control of integral membrane proteins. The protein is ATP-dependent zinc metalloprotease FtsH of Rubrobacter xylanophilus (strain DSM 9941 / JCM 11954 / NBRC 16129 / PRD-1).